Here is a 232-residue protein sequence, read N- to C-terminus: tRNA (guanine-N(7)-)-methyltransferase (232 aa).

Glutamate 63, glutamate 88, aspartate 115, and aspartate 137 together coordinate S-adenosyl-L-methionine. Aspartate 137 is an active-site residue. Substrate-binding positions include lysine 141, aspartate 173, and threonine 211 to glutamate 214.

It belongs to the class I-like SAM-binding methyltransferase superfamily. TrmB family.

The catalysed reaction is guanosine(46) in tRNA + S-adenosyl-L-methionine = N(7)-methylguanosine(46) in tRNA + S-adenosyl-L-homocysteine. It participates in tRNA modification; N(7)-methylguanine-tRNA biosynthesis. Its function is as follows. Catalyzes the formation of N(7)-methylguanine at position 46 (m7G46) in tRNA. This is tRNA (guanine-N(7)-)-methyltransferase from Chelativorans sp. (strain BNC1).